The primary structure comprises 359 residues: WAT1-related protein At4g28040 (359 aa).

10 helical membrane-spanning segments follow: residues 10-30 (LALV…KAAF), 37-57 (TVFV…ISFI), 66-86 (PSLG…GVTV), 103-123 (ACAM…IVGF), 133-153 (SVAK…MTFL), 170-190 (WLLG…WLIL), 204-224 (TSAC…LALG), 240-260 (SCCI…AWIV), 266-286 (VFSA…GALY), and 292-312 (YLGS…VLWG). Residues 18 to 131 (TSAGVALFTK…GFESIKRRSM (114 aa)) enclose the EamA 1 domain. In terms of domain architecture, EamA 2 spans 199–310 (PDHLYTSACT…AIILGLYIVL (112 aa)).

It belongs to the drug/metabolite transporter (DMT) superfamily. Plant drug/metabolite exporter (P-DME) (TC 2.A.7.4) family.

It is found in the membrane. The chain is WAT1-related protein At4g28040 from Arabidopsis thaliana (Mouse-ear cress).